The following is a 479-amino-acid chain: Glutamyl-tRNA(Gln) amidotransferase subunit A (479 aa).

Residues K71 and S146 each act as charge relay system in the active site. S170 (acyl-ester intermediate) is an active-site residue.

The protein belongs to the amidase family. GatA subfamily. Heterotrimer of A, B and C subunits.

The enzyme catalyses L-glutamyl-tRNA(Gln) + L-glutamine + ATP + H2O = L-glutaminyl-tRNA(Gln) + L-glutamate + ADP + phosphate + H(+). Allows the formation of correctly charged Gln-tRNA(Gln) through the transamidation of misacylated Glu-tRNA(Gln) in organisms which lack glutaminyl-tRNA synthetase. The reaction takes place in the presence of glutamine and ATP through an activated gamma-phospho-Glu-tRNA(Gln). This Lactobacillus gasseri (strain ATCC 33323 / DSM 20243 / BCRC 14619 / CIP 102991 / JCM 1131 / KCTC 3163 / NCIMB 11718 / NCTC 13722 / AM63) protein is Glutamyl-tRNA(Gln) amidotransferase subunit A.